The primary structure comprises 214 residues: Cysteine-rich venom protein LEI1 (214 aa).

Positions 1-18 (MIAFILLSLAAVLQQSFG) are cleaved as a signal peptide. Residues 37–165 (VNMHNSLRRS…YYSYFYVCQY (129 aa)) form the SCP domain. 5 disulfide bridges follow: C74-C152, C91-C166, C147-C163, C185-C192, and C188-C197. One can recognise a ShKT domain in the interval 201–214 (CTVENKFTNCNTLV).

This sequence belongs to the CRISP family. In terms of tissue distribution, expressed by the venom gland.

It is found in the secreted. In terms of biological role, blocks contraction of smooth muscle elicited by high potassium-induced depolarization, but does not block caffeine-stimulated contraction. May target voltage-gated calcium channels on smooth muscle. The sequence is that of Cysteine-rich venom protein LEI1 from Leioheterodon madagascariensis (Malagasy giant hognose snake).